The primary structure comprises 20 residues: Alkaline phosphatase (20 aa).

The segment at 1–20 is disordered; it reads TDMLAVSVSSTDAIGHKYGT.

Homodimer; may be disulfide-linked. Post-translationally, the N-terminus is blocked.

The catalysed reaction is a phosphate monoester + H2O = an alcohol + phosphate. Completely inhibited by thiol-reducing agents, such as DTT and 2-mercaptoethanol. Activity was also inhibited by sodium orthovanadate, sodium molybdate, N-ethylmaleimide, EDTA and zinc ion, but was not inhibited by okadaic acid. In terms of biological role, acts against tyrosine-phosphatases. The polypeptide is Alkaline phosphatase (Prevotella intermedia).